The sequence spans 213 residues: MFVTEAYAQSAPTVGETHTETPAVGQPQPEATHTETGVAHGAEHGASGVFPPFDQSTYASQVLWLAITFGLFYLLMQKVIVPRVGGILENRHGRIAQDLDEAARLKAEADTAVETYEKELAAARAKASSIGASARDAAKAKADADRAAIEAGLAEKLAAAEKRIAGIRDHAFADVGAIAEETATAIVDQLVGAKVKDTDVKAAIAAASAVKGA.

Residues 1–45 (MFVTEAYAQSAPTVGETHTETPAVGQPQPEATHTETGVAHGAEHG) form a disordered region. A helical membrane pass occupies residues 57 to 76 (TYASQVLWLAITFGLFYLLM).

The protein belongs to the ATPase B chain family. F-type ATPases have 2 components, F(1) - the catalytic core - and F(0) - the membrane proton channel. F(1) has five subunits: alpha(3), beta(3), gamma(1), delta(1), epsilon(1). F(0) has three main subunits: a(1), b(2) and c(10-14). The alpha and beta chains form an alternating ring which encloses part of the gamma chain. F(1) is attached to F(0) by a central stalk formed by the gamma and epsilon chains, while a peripheral stalk is formed by the delta and b chains.

The protein resides in the cell inner membrane. Functionally, f(1)F(0) ATP synthase produces ATP from ADP in the presence of a proton or sodium gradient. F-type ATPases consist of two structural domains, F(1) containing the extramembraneous catalytic core and F(0) containing the membrane proton channel, linked together by a central stalk and a peripheral stalk. During catalysis, ATP synthesis in the catalytic domain of F(1) is coupled via a rotary mechanism of the central stalk subunits to proton translocation. Component of the F(0) channel, it forms part of the peripheral stalk, linking F(1) to F(0). The b'-subunit is a diverged and duplicated form of b found in plants and photosynthetic bacteria. The chain is ATP synthase subunit b 2 (atpF2) from Agrobacterium fabrum (strain C58 / ATCC 33970) (Agrobacterium tumefaciens (strain C58)).